The chain runs to 479 residues: Cobyric acid synthase (479 aa).

The region spanning 250-442 (TRTVAVVAYP…LHGLFEDAAA (193 aa)) is the GATase cobBQ-type domain. Cysteine 331 acts as the Nucleophile in catalysis. Histidine 434 is an active-site residue.

The protein belongs to the CobB/CobQ family. CobQ subfamily.

The protein operates within cofactor biosynthesis; adenosylcobalamin biosynthesis. Its function is as follows. Catalyzes amidations at positions B, D, E, and G on adenosylcobyrinic A,C-diamide. NH(2) groups are provided by glutamine, and one molecule of ATP is hydrogenolyzed for each amidation. The chain is Cobyric acid synthase from Variovorax paradoxus (strain S110).